Here is a 288-residue protein sequence, read N- to C-terminus: Mortality factor 4-like protein 2 (288 aa).

A compositionally biased stretch (polar residues) spans 1 to 15 (MSSRKQGSQPRGQQS). The tract at residues 1-113 (MSSRKQGSQP…RADPTVESEE (113 aa)) is disordered. Residue serine 71 is modified to Phosphoserine. In terms of domain architecture, MRG spans 117–288 (NRMEVKVKIP…ASAEYHRKAL (172 aa)).

Component of the NuA4 histone acetyltransferase complex which contains the catalytic subunit KAT5/TIP60 and the subunits EP400, TRRAP/PAF400, BRD8/SMAP, EPC1, DMAP1/DNMAP1, RUVBL1/TIP49, RUVBL2, ING3, actin, ACTL6A/BAF53A, MORF4L1/MRG15, MORF4L2/MRGX, MRGBP, YEATS4/GAS41 and VPS72/YL1. The NuA4 complex interacts with MYC and the adenovirus E1A protein. MORF4L1 may also participate in the formation of NuA4 related complexes which lack the KAT5/TIP60 catalytic subunit, but which include the SWI/SNF related protein SRCAP. Component of the MSIN3A histone deacetylase complex, which includes SIN3A, HDAC2, ARID4B, MORF4L1, RBBP4/RbAp48, and RBBP7/RbAp46. Interacts with MRFAP1 and RB1. May also interact with one or more as yet undefined members of the TLE (transducin-like enhancer of split) family of transcriptional repressors.

The protein resides in the nucleus. Its function is as follows. Component of the NuA4 histone acetyltransferase complex which is involved in transcriptional activation of select genes principally by acetylation of nucleosomal histone H4 and H2A. This modification may both alter nucleosome - DNA interactions and promote interaction of the modified histones with other proteins which positively regulate transcription. This complex may be required for the activation of transcriptional programs associated with oncogene and proto-oncogene mediated growth induction, tumor suppressor mediated growth arrest and replicative senescence, apoptosis, and DNA repair. The NuA4 complex ATPase and helicase activities seem to be, at least in part, contributed by the association of RUVBL1 and RUVBL2 with EP400. NuA4 may also play a direct role in DNA repair when directly recruited to sites of DNA damage. Also a component of the MSIN3A complex which acts to repress transcription by deacetylation of nucleosomal histones. The polypeptide is Mortality factor 4-like protein 2 (MORF4L2) (Homo sapiens (Human)).